The sequence spans 119 residues: MSIGKNVARLRRAKSTRLHIRKLGVPRLSVLRTGRHLYAQIFTADGSKVIAAANTLQSQVKGGLKNGKNSLAAIKVGKLIAERARAVGVDRIAFDRSGYLYHGRIKILADAARDAGLKF.

This sequence belongs to the universal ribosomal protein uL18 family. Part of the 50S ribosomal subunit; part of the 5S rRNA/L5/L18/L25 subcomplex. Contacts the 5S and 23S rRNAs.

Functionally, this is one of the proteins that bind and probably mediate the attachment of the 5S RNA into the large ribosomal subunit, where it forms part of the central protuberance. This is Large ribosomal subunit protein uL18 from Xylella fastidiosa (strain M23).